The primary structure comprises 227 residues: Ribosomal RNA large subunit methyltransferase E (227 aa).

Gly78, Trp80, Asp103, Asp119, and Asp143 together coordinate S-adenosyl-L-methionine. Lys183 (proton acceptor) is an active-site residue.

The protein belongs to the class I-like SAM-binding methyltransferase superfamily. RNA methyltransferase RlmE family.

Its subcellular location is the cytoplasm. The enzyme catalyses uridine(2552) in 23S rRNA + S-adenosyl-L-methionine = 2'-O-methyluridine(2552) in 23S rRNA + S-adenosyl-L-homocysteine + H(+). Specifically methylates the uridine in position 2552 of 23S rRNA at the 2'-O position of the ribose in the fully assembled 50S ribosomal subunit. This Rickettsia rickettsii (strain Iowa) protein is Ribosomal RNA large subunit methyltransferase E.